We begin with the raw amino-acid sequence, 145 residues long: Probable inactive ribonuclease-like protein 12 (145 aa).

A signal peptide spans 1-19; that stretch reads MVLMVVVFLLLLFWENELT.

The protein belongs to the pancreatic ribonuclease family.

It localises to the secreted. Functionally, does not exhibit any ribonuclease activity. The protein is Probable inactive ribonuclease-like protein 12 (Rnase12) of Mus musculus (Mouse).